The sequence spans 363 residues: Protein RecA (363 aa).

ATP is bound at residue 79-86 (GPESSGKT).

It belongs to the RecA family.

It is found in the cytoplasm. Its function is as follows. Can catalyze the hydrolysis of ATP in the presence of single-stranded DNA, the ATP-dependent uptake of single-stranded DNA by duplex DNA, and the ATP-dependent hybridization of homologous single-stranded DNAs. It interacts with LexA causing its activation and leading to its autocatalytic cleavage. The sequence is that of Protein RecA from Methylobacterium radiotolerans (strain ATCC 27329 / DSM 1819 / JCM 2831 / NBRC 15690 / NCIMB 10815 / 0-1).